Reading from the N-terminus, the 2102-residue chain is Mediator of RNA polymerase II transcription subunit 13-like (2102 aa).

Disordered regions lie at residues 304–335 (SYAGAPHNQLVHGDTGISSVTLTPPTSPEEAQ), 432–487 (QRAC…QPSL), 514–587 (VTSS…LDPL), 689–758 (SSAV…TTSL), 776–819 (NSDE…DLHQ), and 947–1034 (SVVE…SSVE). Over residues 439 to 450 (GHPPSAGQPPQP) the composition is skewed to pro residues. A compositionally biased stretch (basic and acidic residues) spans 455-467 (KMAEKLEKGDKQQ). A compositionally biased stretch (acidic residues) spans 693–714 (CDEDPEQESDPYAFEEGDEEFN). Basic and acidic residues-rich tracts occupy residues 715–737 (FSDKDKKSGPEREAGKKAKREDG) and 794–804 (AEEKFGGKEPK). Over residues 947–974 (SVVEQEQSCTPQTHNTFMSNSAPPSNSG) the composition is skewed to polar residues. Positions 979–990 (PSPATPRISAPT) are enriched in low complexity. Polar residues predominate over residues 1015-1029 (SDLNSPASTPSTCRP). 2 consecutive short sequence motifs (LXXLL motif) follow at residues 1165 to 1169 (LMLLL) and 1254 to 1258 (LRMLL). Disordered stretches follow at residues 1451–1574 (LTQR…DGDS) and 1948–1983 (NSPTTSPVHSPGSHYHHGGDGSKGQGTDRMESHDES). Composition is skewed to low complexity over residues 1458–1467 (SSSQTSSSSS), 1476–1502 (TPTTNSNSNTNTNTTPTSTSTSSSSSS), and 1522–1538 (GAQGLQSSQQSGGQSAG). A compositionally biased stretch (polar residues) spans 1542-1552 (DATSATSQPQV). Over residues 1973-1983 (GTDRMESHDES) the composition is skewed to basic and acidic residues.

It belongs to the Mediator complex subunit 13 family. In terms of assembly, component of the Mediator complex.

It is found in the nucleus. Component of the Mediator complex, a coactivator involved in regulated gene transcription of nearly all RNA polymerase II-dependent genes. Mediator functions as a bridge to convey information from gene-specific regulatory proteins to the basal RNA polymerase II transcription machinery. Mediator is recruited to promoters by direct interactions with regulatory proteins and serves as a scaffold for the assembly of a functional preinitiation complex with RNA polymerase II and the general transcription factors. The chain is Mediator of RNA polymerase II transcription subunit 13-like from Danio rerio (Zebrafish).